Here is a 230-residue protein sequence, read N- to C-terminus: Membrane protein (230 aa).

Topologically, residues 1–24 (MSSPTTPVPVISWTADEAIKFLKE) are virion surface. The helical transmembrane segment at 25–45 (WNFSLGIIVLFITIILQFGYT) threads the bilayer. Topologically, residues 46–55 (SRSMFVYVIK) are intravirion. A helical membrane pass occupies residues 56–76 (MVILWLMWPLTIILTIFNCVY). At 77-84 (ALNNVYLG) the chain is on the virion surface side. The helical transmembrane segment at 85–105 (FSIVFTIVAIIMWVVYFVNSI) threads the bilayer. The Intravirion segment spans residues 106-228 (RLFIRTGSWW…SGMDTALLRN (123 aa)).

Belongs to the betacoronaviruses M protein family. As to quaternary structure, homomultimer. Interacts with envelope E protein in the budding compartment of the host cell, which is located between endoplasmic reticulum and the Golgi complex. Forms a complex with HE and S proteins. Interacts with nucleocapsid N protein. This interaction probably participates in RNA packaging into the virus.

It localises to the virion membrane. It is found in the host Golgi apparatus membrane. Its function is as follows. Component of the viral envelope that plays a central role in virus morphogenesis and assembly via its interactions with other viral proteins. This chain is Membrane protein, found in Porcine hemagglutinating encephalomyelitis virus (strain 67N) (HEV-67N).